The primary structure comprises 236 residues: 3-oxoacyl-[acyl-carrier-protein] reductase (236 aa).

Methionine 1 bears the N-acetylmethionine mark. Residues 11 to 14 (SRGI) and 34 to 35 (RN) contribute to the NADP(+) site. Lysine 40 carries the N6-acetyllysine modification. NADP(+) contacts are provided by residues aspartate 56 and 83–85 (AAG). An N6-acetyllysine modification is found at lysine 96. Serine 134 contributes to the substrate binding site. Residues tyrosine 147, lysine 151, and 180-182 (IRT) each bind NADP(+). Catalysis depends on tyrosine 147, which acts as the Proton acceptor. An N6-acetyllysine modification is found at lysine 194.

The protein belongs to the short-chain dehydrogenases/reductases (SDR) family. Homotetramer (in vitro). Heterotetramer with HSD17B8; contains two molecules each of HSD17B8 and CBR4. Does not form homotetramers when HSD17B8 is coexpressed, only heterotetramers (in vitro).

It is found in the mitochondrion matrix. It carries out the reaction a (3R)-hydroxyacyl-[ACP] + NADP(+) = a 3-oxoacyl-[ACP] + NADPH + H(+). It catalyses the reaction a quinone + NADPH + H(+) = a quinol + NADP(+). It functions in the pathway lipid metabolism; fatty acid biosynthesis. Its function is as follows. Component of the heterotetramer complex KAR (3-ketoacyl-[acyl carrier protein] reductase or 3-ketoacyl-[ACP] reductase) that forms part of the mitochondrial fatty acid synthase (mtFAS). Beta-subunit of the KAR heterotetramer complex, responsible for the 3-ketoacyl-ACP reductase activity of the mtFAS, reduces 3-oxoacyl-[ACP] to (3R)-hydroxyacyl-[ACP] in a NADPH-dependent manner with no chain length preference, thereby participating in mitochondrial fatty acid biosynthesis. The homotetramer has NADPH-dependent quinone reductase activity (in vitro), hence could play a role in protection against cytotoxicity of exogenous quinones. As a heterotetramer, it can also reduce 9,10-phenanthrenequinone, 1,4-benzoquinone and various other o-quinones and p-quinones (in vitro). This chain is 3-oxoacyl-[acyl-carrier-protein] reductase (Cbr4), found in Mus musculus (Mouse).